Consider the following 352-residue polypeptide: Chorismate synthase (352 aa).

Residues arginine 48 and arginine 54 each coordinate NADP(+). FMN contacts are provided by residues arginine 125–serine 127, asparagine 238–alanine 239, glycine 278, lysine 293–serine 297, and arginine 319.

This sequence belongs to the chorismate synthase family. As to quaternary structure, homotetramer. The cofactor is FMNH2.

The catalysed reaction is 5-O-(1-carboxyvinyl)-3-phosphoshikimate = chorismate + phosphate. Its pathway is metabolic intermediate biosynthesis; chorismate biosynthesis; chorismate from D-erythrose 4-phosphate and phosphoenolpyruvate: step 7/7. Catalyzes the anti-1,4-elimination of the C-3 phosphate and the C-6 proR hydrogen from 5-enolpyruvylshikimate-3-phosphate (EPSP) to yield chorismate, which is the branch point compound that serves as the starting substrate for the three terminal pathways of aromatic amino acid biosynthesis. This reaction introduces a second double bond into the aromatic ring system. The sequence is that of Chorismate synthase from Bordetella avium (strain 197N).